A 269-amino-acid chain; its full sequence is Tryptophan synthase alpha chain (269 aa).

Residues E50 and D61 each act as proton acceptor in the active site.

The protein belongs to the TrpA family. As to quaternary structure, tetramer of two alpha and two beta chains.

The catalysed reaction is (1S,2R)-1-C-(indol-3-yl)glycerol 3-phosphate + L-serine = D-glyceraldehyde 3-phosphate + L-tryptophan + H2O. The protein operates within amino-acid biosynthesis; L-tryptophan biosynthesis; L-tryptophan from chorismate: step 5/5. Its function is as follows. The alpha subunit is responsible for the aldol cleavage of indoleglycerol phosphate to indole and glyceraldehyde 3-phosphate. The sequence is that of Tryptophan synthase alpha chain from Francisella tularensis subsp. tularensis (strain WY96-3418).